The following is a 398-amino-acid chain: Carbamoyl phosphate synthase small chain (398 aa).

The interval 1 to 204 (MSPLLPSFPP…PAYGTLDTGK (204 aa)) is CPSase. Positions 53, 256, and 258 each coordinate L-glutamine. One can recognise a Glutamine amidotransferase type-1 domain in the interval 208–395 (KVVAYDFGVK…VELMNAASKK (188 aa)). Cys284 (nucleophile) is an active-site residue. L-glutamine contacts are provided by Leu285, Gln288, Asn326, Gly328, and Phe329. Active-site residues include His368 and Glu370.

This sequence belongs to the CarA family. As to quaternary structure, composed of two chains; the small (or glutamine) chain promotes the hydrolysis of glutamine to ammonia, which is used by the large (or ammonia) chain to synthesize carbamoyl phosphate. Tetramer of heterodimers (alpha,beta)4.

It catalyses the reaction hydrogencarbonate + L-glutamine + 2 ATP + H2O = carbamoyl phosphate + L-glutamate + 2 ADP + phosphate + 2 H(+). It carries out the reaction L-glutamine + H2O = L-glutamate + NH4(+). It functions in the pathway amino-acid biosynthesis; L-arginine biosynthesis; carbamoyl phosphate from bicarbonate: step 1/1. It participates in pyrimidine metabolism; UMP biosynthesis via de novo pathway; (S)-dihydroorotate from bicarbonate: step 1/3. In terms of biological role, small subunit of the glutamine-dependent carbamoyl phosphate synthetase (CPSase). CPSase catalyzes the formation of carbamoyl phosphate from the ammonia moiety of glutamine, carbonate, and phosphate donated by ATP, constituting the first step of 2 biosynthetic pathways, one leading to arginine and/or urea and the other to pyrimidine nucleotides. The small subunit (glutamine amidotransferase) binds and cleaves glutamine to supply the large subunit with the substrate ammonia. The protein is Carbamoyl phosphate synthase small chain of Polynucleobacter necessarius subsp. necessarius (strain STIR1).